The following is a 254-amino-acid chain: Pimeloyl-[acyl-carrier protein] methyl ester esterase (254 aa).

Residues 14 to 242 (LVLLHGWGMN…ASHAPFISHP (229 aa)) form the AB hydrolase-1 domain. Substrate-binding positions include Trp-20, 82 to 83 (SL), and 143 to 147 (FLAIQ). Catalysis depends on Ser-82, which acts as the Nucleophile. Active-site residues include Asp-207 and His-235. Position 235 (His-235) interacts with substrate.

It belongs to the AB hydrolase superfamily. Carboxylesterase BioH family. As to quaternary structure, monomer.

Its subcellular location is the cytoplasm. It carries out the reaction 6-carboxyhexanoyl-[ACP] methyl ester + H2O = 6-carboxyhexanoyl-[ACP] + methanol + H(+). Its pathway is cofactor biosynthesis; biotin biosynthesis. Functionally, the physiological role of BioH is to remove the methyl group introduced by BioC when the pimeloyl moiety is complete. It allows to synthesize pimeloyl-ACP via the fatty acid synthetic pathway through the hydrolysis of the ester bonds of pimeloyl-ACP esters. In Aeromonas salmonicida (strain A449), this protein is Pimeloyl-[acyl-carrier protein] methyl ester esterase.